Here is a 341-residue protein sequence, read N- to C-terminus: UPF0324 membrane protein SMU_2059c (341 aa).

The next 11 helical transmembrane spans lie at 7–24 (KLSG…AWFL), 28–47 (FPLV…LAIF), 68–85 (FAVV…VLTV), 90–107 (LPII…AFLL), 120–142 (LVGV…VIQA), 147–169 (IAQS…PTLG), 178–200 (GFAL…AAAW), 211–233 (GATI…LSFY), 254–276 (VFPM…TALG), 291–310 (FCIV…VKLV), and 317–339 (IVLG…HLLG).

The protein belongs to the UPF0324 family.

It is found in the cell membrane. The chain is UPF0324 membrane protein SMU_2059c from Streptococcus mutans serotype c (strain ATCC 700610 / UA159).